The chain runs to 492 residues: N-succinylglutamate 5-semialdehyde dehydrogenase (492 aa).

220–225 (GSANTG) is an NAD(+) binding site. Active-site residues include Glu243 and Cys277.

The protein belongs to the aldehyde dehydrogenase family. AstD subfamily.

It carries out the reaction N-succinyl-L-glutamate 5-semialdehyde + NAD(+) + H2O = N-succinyl-L-glutamate + NADH + 2 H(+). Its pathway is amino-acid degradation; L-arginine degradation via AST pathway; L-glutamate and succinate from L-arginine: step 4/5. Catalyzes the NAD-dependent reduction of succinylglutamate semialdehyde into succinylglutamate. This is N-succinylglutamate 5-semialdehyde dehydrogenase from Escherichia coli O7:K1 (strain IAI39 / ExPEC).